The primary structure comprises 138 residues: Large ribosomal subunit protein uL16 (138 aa).

This sequence belongs to the universal ribosomal protein uL16 family. In terms of assembly, part of the 50S ribosomal subunit.

Binds 23S rRNA and is also seen to make contacts with the A and possibly P site tRNAs. The sequence is that of Large ribosomal subunit protein uL16 from Corynebacterium kroppenstedtii (strain DSM 44385 / JCM 11950 / CIP 105744 / CCUG 35717).